We begin with the raw amino-acid sequence, 353 residues long: 2-Hydroxyacid oxidase 2 (353 aa).

One can recognise an FMN hydroxy acid dehydrogenase domain in the interval 2–353 (PLVCLADFKA…SPDLIQFSRL (352 aa)). FMN is bound by residues 77–79 (PTA), S106, and Q128. Position 130 (Y130) interacts with a 2-oxocarboxylate. S133 carries the phosphoserine modification. T156 serves as a coordination point for FMN. Position 165 (R165) interacts with a 2-oxocarboxylate. FMN is bound at residue K224. The active-site Proton acceptor is H248. Residue R251 participates in a 2-oxocarboxylate binding. FMN contacts are provided by residues 279–283 (DGGVR) and 302–303 (GR). The Microbody targeting signal motif lies at 351–353 (SRL).

The protein belongs to the FMN-dependent alpha-hydroxy acid dehydrogenase family. In terms of assembly, homotetramer. Could also form homooctamer. FMN serves as cofactor. As to expression, expressed in kidney.

Its subcellular location is the peroxisome. It catalyses the reaction a (2S)-2-hydroxycarboxylate + O2 = a 2-oxocarboxylate + H2O2. The catalysed reaction is 2-hydroxyoctanoate + O2 = 2-oxooctanoate + H2O2. It carries out the reaction 2-hydroxyhexadecanoate + O2 = 2-oxohexadecanoate + H2O2. The enzyme catalyses 2-hydroxyhexanoate + O2 = 2-oxohexanoate + H2O2. It catalyses the reaction mandelate + O2 = phenylglyoxylate + H2O2. Is inhibited in vitro by CCPST (4-carboxy-5-(4-chlorophenyl)sulfanyl-1,2,3-thiadiazole). Its function is as follows. Oxidase that catalyzes the oxidation of medium and long chain hydroxyacids such as 2-hydroxyhexadecanoate, 2-hydroxyoctanoate, 2-hydroxyhexanoate and 2-hydroxybutanoate, to the correspondong 2-oxoacids. Its role in the oxidation of 2-hydroxy fatty acids may contribute to the general pathway of fatty acid alpha-oxidation. Can also use mandelate as substrate. Active in vitro with the artificial electron acceptor 2,6-dichlorophenolindophenol (DCIP), but O2 is believed to be the physiological electron acceptor, leading to the production of H2O2. The chain is 2-Hydroxyacid oxidase 2 (Hao2) from Rattus norvegicus (Rat).